Reading from the N-terminus, the 208-residue chain is Ribosomal RNA small subunit methyltransferase G (208 aa).

Residues Gly78, Phe83, Glu101 to Ser103, Ile129 to Glu130, and Arg142 each bind S-adenosyl-L-methionine.

This sequence belongs to the methyltransferase superfamily. RNA methyltransferase RsmG family.

It localises to the cytoplasm. In terms of biological role, specifically methylates the N7 position of a guanine in 16S rRNA. This chain is Ribosomal RNA small subunit methyltransferase G, found in Borrelia garinii subsp. bavariensis (strain ATCC BAA-2496 / DSM 23469 / PBi) (Borreliella bavariensis).